Reading from the N-terminus, the 224-residue chain is Transcription cofactor HES-6 (224 aa).

The interval 1-31 (MAPPAAPGRDRVGREDEDGWETRGDRKARKP) is disordered. The span at 8–25 (GRDRVGREDEDGWETRGD) shows a compositional bias: basic and acidic residues. The bHLH domain maps to 25 to 77 (DRKARKPLVEKKRRARINESLQELRLLLAGAEVQAKLENAEVLELTVRRVQGV). The 34-residue stretch at 96–129 (FAAGYIQCMHEVHTFVSTCQAIDATVAAELLNHL) folds into the Orange domain. The segment covering 147–161 (DALAGPPRAPGRSGW) has biased composition (low complexity). A disordered region spans residues 147-205 (DALAGPPRAPGRSGWPAGGAPGSPIPSPPGPGDDLCSDLEEAPEAELSQAPAEGPDLVP). Residues 181–190 (LCSDLEEAPE) are compositionally biased toward acidic residues. Positions 221-224 (WRPW) match the WRPW motif motif.

Transcription repression requires formation of a complex with a corepressor protein of the Groucho/TLE family. Interacts with HES1.

Its subcellular location is the nucleus. Does not bind DNA itself but suppresses both HES1-mediated N box-dependent transcriptional repression and binding of HES1 to E box sequences. Also suppresses HES1-mediated inhibition of the heterodimer formed by ASCL1/MASH1 and TCF3/E47, allowing ASCL1 and TCF3 to up-regulate transcription in its presence. Promotes cell differentiation. This Homo sapiens (Human) protein is Transcription cofactor HES-6.